The primary structure comprises 510 residues: DNA-directed RNA polymerase I subunit RPA34 (510 aa).

Met-1 is modified (N-acetylmethionine). Residues Met-1–Ser-31 form a disordered region. Ser-27 is modified (phosphoserine). Tyr-80 is subject to Phosphotyrosine. The segment at Gly-120 to Pro-143 is disordered. Residues Ser-128, Ser-136, Ser-172, and Ser-205 each carry the phosphoserine modification. The segment covering Gln-131–Pro-143 has biased composition (pro residues). Residues Leu-203–Val-510 form a disordered region. Over residues Gly-258 to Lys-270 the composition is skewed to basic and acidic residues. Residue Lys-270 forms a Glycyl lysine isopeptide (Lys-Gly) (interchain with G-Cter in SUMO1); alternate linkage. Lys-270 participates in a covalent cross-link: Glycyl lysine isopeptide (Lys-Gly) (interchain with G-Cter in SUMO2); alternate. The residue at position 285 (Ser-285) is a Phosphoserine. Thr-287 carries the post-translational modification Phosphothreonine. Phosphoserine is present on Ser-309. A Glycyl lysine isopeptide (Lys-Gly) (interchain with G-Cter in SUMO1); alternate cross-link involves residue Lys-314. A Glycyl lysine isopeptide (Lys-Gly) (interchain with G-Cter in SUMO2); alternate cross-link involves residue Lys-314. 2 stretches are compositionally biased toward low complexity: residues Ala-372 to Ala-382 and Asp-394 to Glu-407. The segment covering Thr-421–Arg-430 has biased composition (basic residues). Positions Glu-436–Glu-452 are enriched in low complexity. Residue Ser-490 is modified to Phosphoserine.

It belongs to the eukaryotic RPA34 RNA polymerase subunit family. Component of the RNA polymerase I (Pol I) complex consisting of 13 subunits: a ten-subunit catalytic core composed of POLR1A/RPA1, POLR1B/RPA2, POLR1C/RPAC1, POLR1D/RPAC2, POLR1H/RPA12, POLR2E/RPABC1, POLR2F/RPABC2, POLR2H/RPABC3, POLR2K/RPABC4 and POLR2L/RPABC5; a mobile stalk subunit POLR1F/RPA43 protruding from the core and additional subunits homologous to general transcription factors POLR1E/RPA49 and POLR1G/RPA34. Forms a heterodimer with POLR1E/RPA49. Part of Pol I pre-initiation complex (PIC), in which Pol I core assembles with RRN3 and promoter-bound UTBF and SL1/TIF-IB complex. Interacts with TAF1A thereby associates with the SL1/TIF-IB complex. Interacts with UBTF. Interacts with POLR1E/PRAF1 through its N-terminal region. In terms of assembly, interacts with CD3E. In terms of processing, undergoes tyrosine phosphorylation upon T-cell receptor (TCR) stimulation. This phosphorylation has not been confirmed by other groups. Phosphorylated on tyrosine residues in initiation-competent Pol I-beta complexes but not in Pol I-alpha complexes.

The protein localises to the nucleus. It localises to the nucleolus. The protein resides in the chromosome. Its function is as follows. Component of RNA polymerase I (Pol I), a DNA-dependent RNA polymerase which synthesizes ribosomal RNA precursors using the four ribonucleoside triphosphates as substrates. Involved in UBTF-activated transcription, presumably at a step following PIC formation. Has been described as a component of preformed T-cell receptor (TCR) complex. This chain is DNA-directed RNA polymerase I subunit RPA34, found in Homo sapiens (Human).